A 99-amino-acid polypeptide reads, in one-letter code: Co-chaperonin GroES (99 aa).

The protein belongs to the GroES chaperonin family. In terms of assembly, heptamer of 7 subunits arranged in a ring. Interacts with the chaperonin GroEL.

It is found in the cytoplasm. Functionally, together with the chaperonin GroEL, plays an essential role in assisting protein folding. The GroEL-GroES system forms a nano-cage that allows encapsulation of the non-native substrate proteins and provides a physical environment optimized to promote and accelerate protein folding. GroES binds to the apical surface of the GroEL ring, thereby capping the opening of the GroEL channel. The protein is Co-chaperonin GroES of Corynebacterium kroppenstedtii (strain DSM 44385 / JCM 11950 / CIP 105744 / CCUG 35717).